The following is an 849-amino-acid chain: MKQTLKDFSNLLLVVLCDYVLGEAEHLVLGEPGHVALSNSTVTVDFHGANGTLRNVSVLLVEASSNQTLTTKYLLTNQSQGTLEFECFYFKEAGDYWFVMTREATNSSLPVPPRERSAFLKVEWPVFHVDLSRTSMAAEGTFQVGLFTSQPLCPFPGDKPDILLEVTFTNSLPEARAGQALPLEIRASKRVELAQGQWVEFDCPPVGPEAYVTVTVVLKLLGRDSVIMSTGPIDLAQKFGYKLVMEPELTCEAGVEVTVLPPPCIFVQGVIAVFKEAPRLPGERTNRLAENSLALGERRTGFNCTLFDMGRNKYCFDFGVSSQSQFSAKEKECMLIRRSIETWGLWQPWSQCSASCGDGVRERRRVCLTSSPSRPGCPGMSSETSPCSLEDCAAFQPSSPSPLQPQAPVKSNNVVTVTGISLCLFIIVATVLITLWRKLGRAPKCSTPARHNSLHGPGCRKNSDEENICELSEPRGSFSDAGDGPAGSPGDPGIPLTYRRSVPAPPDDEASGSESFQANAQKIIPPLFSYRLAQQQLKEMKKKGLTETTKVYHVSQSPLTDTAIDAAATAAAAAAASPGGSESPEEAAAGKFRIKSPFLEHPPTVGAGDRPPSRLDHPFSAASCAVSPSQTLLRKSQVRSHSRGSHFRRTASFHEARQARPFRERSLSTLTPRPTPAHGPRARTWDQAGERGRPPSRGTALFPEKRDHGPGAAGASGPLSPLPKPHSLGPPPRKPDLGDRQAGFVGAGERPEPPRARRGPSPSHRSVSRKQPSPPAPKDGYQRVSPLSPSQGRKDKCQSFPAHPEFAFYDNTSFGLTEAEQRMLDLPGYFGSNEEDETTSTLSVEKLVI.

Positions 1–24 (MKQTLKDFSNLLLVVLCDYVLGEA) are cleaved as a signal peptide. Topologically, residues 25–413 (EHLVLGEPGH…QPQAPVKSNN (389 aa)) are extracellular. 7 N-linked (GlcNAc...) asparagine glycosylation sites follow: Asn-39, Asn-50, Asn-55, Asn-66, Asn-77, Asn-106, and Asn-303. In terms of domain architecture, TSP type-1 spans 340 to 393 (IETWGLWQPWSQCSASCGDGVRERRRVCLTSSPSRPGCPGMSSETSPCSLEDCA). 3 disulfides stabilise this stretch: Cys-352-Cys-387, Cys-356-Cys-392, and Cys-367-Cys-377. A helical transmembrane segment spans residues 414–434 (VVTVTGISLCLFIIVATVLIT). Residues 435 to 849 (LWRKLGRAPK…STLSVEKLVI (415 aa)) are Cytoplasmic-facing. Position 463 is a phosphoserine (Ser-463). 3 disordered regions span residues 472–516 (SEPR…SESF), 595–799 (KSPF…KCQS), and 828–849 (GYFG…KLVI). A compositionally biased stretch (low complexity) spans 479 to 493 (SDAGDGPAGSPGDPG). Positions 636–651 (SQVRSHSRGSHFRRTA) are enriched in basic residues. Residues 652 to 666 (SFHEARQARPFRERS) show a composition bias toward basic and acidic residues. Over residues 720 to 732 (SPLPKPHSLGPPP) the composition is skewed to pro residues.

In terms of assembly, part of a complex composed of THSD1, PTK2/FAK1, TLN1 and VCL. Interacts with TLN1.

It is found in the endosome membrane. The protein resides in the cell junction. The protein localises to the focal adhesion. Is a positive regulator of nascent focal adhesion assembly, involved in the modulation of endothelial cell attachment to the extracellular matrix. This is Thrombospondin type-1 domain-containing protein 1 (THSD1) from Bos taurus (Bovine).